Here is a 635-residue protein sequence, read N- to C-terminus: Very-long-chain aldehyde decarbonylase GL1-6 (635 aa).

4 helical membrane passes run 46–66 (LLNF…QLWI), 100–120 (IILT…AQVA), 127–147 (GMVV…YWLH), and 183–203 (VVYF…GTVS). The Fatty acid hydroxylase domain maps to 139–273 (VEFLYYWLHR…MPVYDYIYGT (135 aa)).

It belongs to the sterol desaturase family. Homodimer. Expressed in germinating seeds and shoots.

Its subcellular location is the endoplasmic reticulum membrane. The catalysed reaction is a long-chain fatty aldehyde + 2 NADPH + O2 + H(+) = a long-chain alkane + formate + 2 NADP(+) + H2O. In terms of biological role, aldehyde decarbonylase involved in the conversion of aldehydes to alkanes. Core component of a very-long-chain alkane synthesis complex. This Oryza sativa subsp. japonica (Rice) protein is Very-long-chain aldehyde decarbonylase GL1-6.